Consider the following 503-residue polypeptide: Cytochrome P450 11B2, mitochondrial (503 aa).

Residues 1–24 (MALRAKAEVCVAAPWLSLQRARAL) constitute a mitochondrion transit peptide. 21-hydroxyprogesterone is bound at residue Phe381. Cys450 is a binding site for heme.

It belongs to the cytochrome P450 family. Heme is required as a cofactor. As to expression, expressed sporadically in the zona glomerulosa (zG) of the adrenal cortex (conventional zonation), as well as in aldosterone-producing cell clusters (APCCs) composed of morphological zG cells in contact with the capsule (variegated zonation).

The protein localises to the mitochondrion inner membrane. It catalyses the reaction a steroid + 2 reduced [adrenodoxin] + O2 + 2 H(+) = an 11beta-hydroxysteroid + 2 oxidized [adrenodoxin] + H2O. It carries out the reaction 21-hydroxyprogesterone + 2 reduced [adrenodoxin] + O2 + 2 H(+) = corticosterone + 2 oxidized [adrenodoxin] + H2O. The enzyme catalyses corticosterone + 2 reduced [adrenodoxin] + O2 + 2 H(+) = 18-hydroxycorticosterone + 2 oxidized [adrenodoxin] + H2O. The catalysed reaction is 18-hydroxycorticosterone + 2 reduced [adrenodoxin] + O2 + 2 H(+) = aldosterone + 2 oxidized [adrenodoxin] + 2 H2O. It catalyses the reaction 11-deoxycortisol + 2 reduced [adrenodoxin] + O2 + 2 H(+) = cortisol + 2 oxidized [adrenodoxin] + H2O. It carries out the reaction 21-hydroxyprogesterone + 2 reduced [adrenodoxin] + O2 + 2 H(+) = 18-hydroxy-11-deoxycorticosterone + 2 oxidized [adrenodoxin] + H2O. The enzyme catalyses cortisol + 2 reduced [adrenodoxin] + O2 + 2 H(+) = 18-hydroxycortisol + 2 oxidized [adrenodoxin] + H2O. The catalysed reaction is 18-hydroxycortisol + 2 reduced [adrenodoxin] + O2 + 2 H(+) = 18-oxocortisol + 2 oxidized [adrenodoxin] + 2 H2O. It participates in steroid biosynthesis. In terms of biological role, a cytochrome P450 monooxygenase that catalyzes the biosynthesis of aldosterone, the main mineralocorticoid in the human body responsible for salt and water homeostasis, thus involved in blood pressure regulation, arterial hypertension, and the development of heart failure. Catalyzes three sequential oxidative reactions of 11-deoxycorticosterone (21-hydroxyprogesterone), namely 11-beta hydroxylation, followed by two successive oxidations at C18 yielding 18-hydroxy and then 18-oxo intermediates (that would not leave the enzyme active site during the consecutive hydroxylation reactions), ending with the formation of aldosterone. Can also produce 18-hydroxycortisol and 18-oxocortisol, derived from successive oxidations of cortisol at C18, normally found at very low levels, but significantly increased in primary aldosteronism, the most common form of secondary hypertension. Mechanistically, uses molecular oxygen inserting one oxygen atom into a substrate and reducing the second into a water molecule. Two electrons are provided by NADPH via a two-protein mitochondrial transfer system comprising flavoprotein FDXR (adrenodoxin/ferredoxin reductase) and nonheme iron-sulfur protein FDX1 or FDX2 (adrenodoxin/ferredoxin). Could also be involved in the androgen metabolic pathway. This is Cytochrome P450 11B2, mitochondrial from Homo sapiens (Human).